We begin with the raw amino-acid sequence, 489 residues long: Trehalose-6-phosphate synthase (489 aa).

Residue Arg-22 participates in D-glucose 6-phosphate binding. 42–43 (GG) provides a ligand contact to UDP-alpha-D-glucose. The D-glucose 6-phosphate site is built by Tyr-94 and Asp-148. Arg-290 and Lys-295 together coordinate UDP-alpha-D-glucose. D-glucose 6-phosphate is bound at residue Arg-328. 393–397 (LVAKE) serves as a coordination point for UDP-alpha-D-glucose.

This sequence belongs to the glycosyltransferase 20 family. Homotetramer.

The enzyme catalyses ADP-alpha-D-glucose + D-glucose 6-phosphate = alpha,alpha-trehalose 6-phosphate + ADP + H(+). It catalyses the reaction CDP-alpha-D-glucose + D-glucose 6-phosphate = alpha,alpha-trehalose 6-phosphate + CDP + H(+). The catalysed reaction is GDP-alpha-D-glucose + D-glucose 6-phosphate = alpha,alpha-trehalose 6-phosphate + GDP + H(+). It carries out the reaction TDP-alpha-D-glucose + D-glucose 6-phosphate = 5-methyl-UDP + alpha,alpha-trehalose 6-phosphate + H(+). The enzyme catalyses D-glucose 6-phosphate + UDP-alpha-D-glucose = alpha,alpha-trehalose 6-phosphate + UDP + H(+). It functions in the pathway glycan biosynthesis; trehalose biosynthesis. In terms of biological role, probably involved in the osmoprotection via the biosynthesis of trehalose and in the production of glycogen and alpha-glucan via the TreS-Pep2 branch involved in the biosynthesis of maltose-1-phosphate (M1P). Catalyzes the transfer of glucose from UDP-glucose (UDP-Glc) to D-glucose 6-phosphate (Glc-6-P) to form trehalose-6-phosphate. Probably also able to use ADP-Glc, CDP-Glc, GDP-Glc and TDP-Glc as glucosyl donors. In Mycobacterium sp. (strain KMS), this protein is Trehalose-6-phosphate synthase.